The chain runs to 306 residues: Porphobilinogen deaminase (306 aa).

S-(dipyrrolylmethanemethyl)cysteine is present on cysteine 239.

It belongs to the HMBS family. As to quaternary structure, monomer. Dipyrromethane is required as a cofactor.

It carries out the reaction 4 porphobilinogen + H2O = hydroxymethylbilane + 4 NH4(+). Its pathway is porphyrin-containing compound metabolism; protoporphyrin-IX biosynthesis; coproporphyrinogen-III from 5-aminolevulinate: step 2/4. In terms of biological role, tetrapolymerization of the monopyrrole PBG into the hydroxymethylbilane pre-uroporphyrinogen in several discrete steps. This Helicobacter pylori (strain P12) protein is Porphobilinogen deaminase.